A 346-amino-acid polypeptide reads, in one-letter code: Envelope glycoprotein M (346 aa).

The Intravirion segment spans residues 1–12 (MALSRVDVINMR). The chain crosses the membrane as a helical span at residues 13–33 (IWVLSIICACLTYVNVTVHLV). Residues 34–76 (AVHFPNLGFPCAYYEINDMKAINLSIRNDIRSLTPQLYLNPIQ) lie on the Virion surface side of the membrane. Residues 77–97 (LICYVVFMDICFFFILVYYIV) form a helical membrane-spanning segment. Over 98-117 (CCVKVFSSEKTPNINQSTRD) the chain is Intravirion. A helical transmembrane segment spans residues 118–140 (ITWMGDSLSCFQFVLTMDTYQFF). Residues 141–147 (VTCLSFR) are Virion surface-facing. Residues 148–168 (LVTLAAFTYCLFFICFTAFTL) form a helical membrane-spanning segment. Over 169-199 (TMITQYQSSERSFFVLKRIHPKLKGTIKYKT) the chain is Intravirion. The chain crosses the membrane as a helical span at residues 200–220 (IIINMIELMLGFSSMVFAITI). Residues 221–236 (CLGLGNNFYIKSSTVA) are Virion surface-facing. A helical membrane pass occupies residues 237–257 (FASINTFFVMSFVYSLVIELI). The Intravirion portion of the chain corresponds to 258-263 (LHQYVK). The helical transmembrane segment at 264–284 (VQFGLHFGILFGILGLTYPIL) threads the bilayer. At 285–293 (KYDSLFKTE) the chain is on the virion surface side. Residues 294-314 (WTVKFIVNLAVITIVCLSFII) traverse the membrane as a helical segment. Residues 315 to 346 (CRLIRFFMRKHHNYKKLPTTVEDLDVLEEANE) lie on the Intravirion side of the membrane.

Belongs to the herpesviridae glycoprotein M family. As to quaternary structure, interacts (via N-terminus) with gN (via N-terminus). The gM-gN heterodimer forms the gCII complex.

The protein resides in the virion membrane. The protein localises to the host Golgi apparatus. It localises to the host trans-Golgi network. It is found in the host endosome membrane. Its subcellular location is the host nucleus inner membrane. Its function is as follows. Envelope glycoprotein important for virion assembly and egress. Plays a role in the correct incorporation of gH-gL into virion membrane. Directs the glycoprotein N (gN) to the host trans-Golgi network. The chain is Envelope glycoprotein M from Homo sapiens (Human).